The primary structure comprises 337 residues: Pyruvate dehydrogenase E1 component subunit beta (337 aa).

Residue Glu73 participates in thiamine diphosphate binding.

In terms of assembly, heterodimer of an alpha and a beta chain. It depends on thiamine diphosphate as a cofactor.

The enzyme catalyses N(6)-[(R)-lipoyl]-L-lysyl-[protein] + pyruvate + H(+) = N(6)-[(R)-S(8)-acetyldihydrolipoyl]-L-lysyl-[protein] + CO2. The pyruvate dehydrogenase complex catalyzes the overall conversion of pyruvate to acetyl-CoA and CO(2). It contains multiple copies of three enzymatic components: pyruvate dehydrogenase (E1), dihydrolipoamide acetyltransferase (E2) and lipoamide dehydrogenase (E3). This chain is Pyruvate dehydrogenase E1 component subunit beta (pdhB), found in Leifsonia xyli subsp. xyli (strain CTCB07).